Consider the following 365-residue polypeptide: Spermidine/putrescine import ATP-binding protein PotA (365 aa).

In terms of domain architecture, ABC transporter spans 9–239 (IRLTNVTKSY…PINHFVANFI (231 aa)). ATP is bound at residue 41-48 (GPSGCGKT).

The protein belongs to the ABC transporter superfamily. Spermidine/putrescine importer (TC 3.A.1.11.1) family. The complex is composed of two ATP-binding proteins (PotA), two transmembrane proteins (PotB and PotC) and a solute-binding protein (PotD).

It is found in the cell membrane. The enzyme catalyses ATP + H2O + polyamine-[polyamine-binding protein]Side 1 = ADP + phosphate + polyamineSide 2 + [polyamine-binding protein]Side 1.. In terms of biological role, part of the ABC transporter complex PotABCD involved in spermidine/putrescine import. Responsible for energy coupling to the transport system. This is Spermidine/putrescine import ATP-binding protein PotA from Lactiplantibacillus plantarum (strain ATCC BAA-793 / NCIMB 8826 / WCFS1) (Lactobacillus plantarum).